Here is a 479-residue protein sequence, read N- to C-terminus: ATP synthase subunit beta (479 aa).

Position 158 to 165 (158 to 165 (GGAGLGKT)) interacts with ATP.

The protein belongs to the ATPase alpha/beta chains family. In terms of assembly, F-type ATPases have 2 components, CF(1) - the catalytic core - and CF(0) - the membrane proton channel. CF(1) has five subunits: alpha(3), beta(3), gamma(1), delta(1), epsilon(1). CF(0) has three main subunits: a(1), b(2) and c(9-12). The alpha and beta chains form an alternating ring which encloses part of the gamma chain. CF(1) is attached to CF(0) by a central stalk formed by the gamma and epsilon chains, while a peripheral stalk is formed by the delta and b chains.

Its subcellular location is the cell inner membrane. The enzyme catalyses ATP + H2O + 4 H(+)(in) = ADP + phosphate + 5 H(+)(out). In terms of biological role, produces ATP from ADP in the presence of a proton gradient across the membrane. The catalytic sites are hosted primarily by the beta subunits. The chain is ATP synthase subunit beta from Rhodopirellula baltica (strain DSM 10527 / NCIMB 13988 / SH1).